Reading from the N-terminus, the 452-residue chain is Ribosomal protein uS12 methylthiotransferase RimO (452 aa).

An MTTase N-terminal domain is found at 8-123 (PRVGFVSLGC…VMQAVHTHLP (116 aa)). Residues C17, C53, C82, C154, C158, and C161 each coordinate [4Fe-4S] cluster. Residues 140 to 381 (LTPKHYAYLK…MEVAEEVSAR (242 aa)) enclose the Radical SAM core domain. Residues 384–452 (QRKVGQTLRV…ADGHDLWGEI (69 aa)) enclose the TRAM domain.

This sequence belongs to the methylthiotransferase family. RimO subfamily. [4Fe-4S] cluster is required as a cofactor.

Its subcellular location is the cytoplasm. It carries out the reaction L-aspartate(89)-[ribosomal protein uS12]-hydrogen + (sulfur carrier)-SH + AH2 + 2 S-adenosyl-L-methionine = 3-methylsulfanyl-L-aspartate(89)-[ribosomal protein uS12]-hydrogen + (sulfur carrier)-H + 5'-deoxyadenosine + L-methionine + A + S-adenosyl-L-homocysteine + 2 H(+). In terms of biological role, catalyzes the methylthiolation of an aspartic acid residue of ribosomal protein uS12. The sequence is that of Ribosomal protein uS12 methylthiotransferase RimO from Cupriavidus pinatubonensis (strain JMP 134 / LMG 1197) (Cupriavidus necator (strain JMP 134)).